The primary structure comprises 186 residues: Membrane protein Rv1476 (186 aa).

The chain crosses the membrane as a helical span at residues 138 to 158 (FPWSALTIVLLIGVLAAAVGA). The interval 166–186 (RRSATSTDAAPGAGDDLNQGV) is disordered.

Its subcellular location is the membrane. Its function is as follows. May affect the expression of genes linked to host macrophage apoptosis and immune response, thereby promoting the survival of M.tuberculosis in host macrophages. Overexpression of the gene increases susceptibility of the bacteria to various stresses, but promotes intracellular survival in host macrophages. It has no impact on the growth rate in vitro. Overexpression causes changes in the transcriptome of THP-1 cells, including expression of genes involved in cell proliferation, fatty acid degradation, cytokine-cytokine receptor interaction and immune response pathways. The chain is Membrane protein Rv1476 from Mycobacterium tuberculosis (strain ATCC 25618 / H37Rv).